A 180-amino-acid polypeptide reads, in one-letter code: Large ribosomal subunit protein uL5 (180 aa).

This sequence belongs to the universal ribosomal protein uL5 family. In terms of assembly, part of the 50S ribosomal subunit; part of the 5S rRNA/L5/L18/L25 subcomplex. Contacts the 5S rRNA and the P site tRNA. Forms a bridge to the 30S subunit in the 70S ribosome.

In terms of biological role, this is one of the proteins that bind and probably mediate the attachment of the 5S RNA into the large ribosomal subunit, where it forms part of the central protuberance. In the 70S ribosome it contacts protein S13 of the 30S subunit (bridge B1b), connecting the 2 subunits; this bridge is implicated in subunit movement. Contacts the P site tRNA; the 5S rRNA and some of its associated proteins might help stabilize positioning of ribosome-bound tRNAs. This Roseiflexus sp. (strain RS-1) protein is Large ribosomal subunit protein uL5.